A 263-amino-acid chain; its full sequence is Small ribosomal subunit protein eS4, Y isoform 1 (263 aa).

In terms of domain architecture, S4 RNA-binding spans leucine 42 to aspartate 104.

It belongs to the eukaryotic ribosomal protein eS4 family.

The chain is Small ribosomal subunit protein eS4, Y isoform 1 (RPS4Y1) from Homo sapiens (Human).